The following is a 397-amino-acid chain: Elongation factor Tu (397 aa).

The tr-type G domain maps to 10-207 (KPHVNVGTVG…AIDAYVPDPV (198 aa)). Positions 19-26 (GHIDHGKT) are G1. GTP is bound at residue 19–26 (GHIDHGKT). T26 contacts Mg(2+). Residues 60–64 (GITIA) are G2. A G3 region spans residues 81-84 (DCPG). Residues 81 to 85 (DCPGH) and 136 to 139 (NKVD) each bind GTP. Residues 136 to 139 (NKVD) are G4. Positions 174-176 (SAL) are G5.

The protein belongs to the TRAFAC class translation factor GTPase superfamily. Classic translation factor GTPase family. EF-Tu/EF-1A subfamily. As to quaternary structure, monomer.

The protein localises to the cytoplasm. The enzyme catalyses GTP + H2O = GDP + phosphate + H(+). Functionally, GTP hydrolase that promotes the GTP-dependent binding of aminoacyl-tRNA to the A-site of ribosomes during protein biosynthesis. In Syntrophobacter fumaroxidans (strain DSM 10017 / MPOB), this protein is Elongation factor Tu.